A 495-amino-acid chain; its full sequence is Aspartyl/glutamyl-tRNA(Asn/Gln) amidotransferase subunit B (495 aa).

The protein belongs to the GatB/GatE family. GatB subfamily. In terms of assembly, heterotrimer of A, B and C subunits.

It catalyses the reaction L-glutamyl-tRNA(Gln) + L-glutamine + ATP + H2O = L-glutaminyl-tRNA(Gln) + L-glutamate + ADP + phosphate + H(+). The enzyme catalyses L-aspartyl-tRNA(Asn) + L-glutamine + ATP + H2O = L-asparaginyl-tRNA(Asn) + L-glutamate + ADP + phosphate + 2 H(+). Its function is as follows. Allows the formation of correctly charged Asn-tRNA(Asn) or Gln-tRNA(Gln) through the transamidation of misacylated Asp-tRNA(Asn) or Glu-tRNA(Gln) in organisms which lack either or both of asparaginyl-tRNA or glutaminyl-tRNA synthetases. The reaction takes place in the presence of glutamine and ATP through an activated phospho-Asp-tRNA(Asn) or phospho-Glu-tRNA(Gln). The chain is Aspartyl/glutamyl-tRNA(Asn/Gln) amidotransferase subunit B from Methanosarcina mazei (strain ATCC BAA-159 / DSM 3647 / Goe1 / Go1 / JCM 11833 / OCM 88) (Methanosarcina frisia).